A 937-amino-acid polypeptide reads, in one-letter code: Bifunctional glutamine synthetase adenylyltransferase/adenylyl-removing enzyme (937 aa).

Residues methionine 1–proline 436 form an adenylyl removase region. The adenylyl transferase stretch occupies residues proline 443–alanine 937.

The protein belongs to the GlnE family. Mg(2+) is required as a cofactor.

The enzyme catalyses [glutamine synthetase]-O(4)-(5'-adenylyl)-L-tyrosine + phosphate = [glutamine synthetase]-L-tyrosine + ADP. The catalysed reaction is [glutamine synthetase]-L-tyrosine + ATP = [glutamine synthetase]-O(4)-(5'-adenylyl)-L-tyrosine + diphosphate. Functionally, involved in the regulation of glutamine synthetase GlnA, a key enzyme in the process to assimilate ammonia. When cellular nitrogen levels are high, the C-terminal adenylyl transferase (AT) inactivates GlnA by covalent transfer of an adenylyl group from ATP to specific tyrosine residue of GlnA, thus reducing its activity. Conversely, when nitrogen levels are low, the N-terminal adenylyl removase (AR) activates GlnA by removing the adenylyl group by phosphorolysis, increasing its activity. The regulatory region of GlnE binds the signal transduction protein PII (GlnB) which indicates the nitrogen status of the cell. This Xanthomonas campestris pv. campestris (strain B100) protein is Bifunctional glutamine synthetase adenylyltransferase/adenylyl-removing enzyme.